Reading from the N-terminus, the 207-residue chain is Mediator of RNA polymerase II transcription subunit 21 (207 aa).

Residues 37–121 are disordered; it reads PHPDVPDAAP…PDSPRTFASR (85 aa). Low complexity predominate over residues 65–80; that stretch reads PVPAQSQASPPAQNPA. The segment covering 84 to 96 has biased composition (gly residues); the sequence is AGAGTSVGEGGQT. The segment covering 97 to 108 has biased composition (low complexity); sequence PGPAAGAGADPN. The stretch at 146–196 forms a coiled coil; that stretch reads IDSSEAEQEKRIRELEGELRRVEEERELKMRELKRLRRTLENVLRAVETGL.

It belongs to the Mediator complex subunit 21 family. Component of the Mediator complex.

It localises to the nucleus. In terms of biological role, component of the Mediator complex, a coactivator involved in the regulated transcription of nearly all RNA polymerase II-dependent genes. Mediator functions as a bridge to convey information from gene-specific regulatory proteins to the basal RNA polymerase II transcription machinery. Mediator is recruited to promoters by direct interactions with regulatory proteins and serves as a scaffold for the assembly of a functional preinitiation complex with RNA polymerase II and the general transcription factors. The polypeptide is Mediator of RNA polymerase II transcription subunit 21 (srb7) (Neosartorya fischeri (strain ATCC 1020 / DSM 3700 / CBS 544.65 / FGSC A1164 / JCM 1740 / NRRL 181 / WB 181) (Aspergillus fischerianus)).